We begin with the raw amino-acid sequence, 324 residues long: Beta-ketoacyl-[acyl-carrier-protein] synthase III (324 aa).

Cysteine 112 is an active-site residue. The disordered stretch occupies residues 181–202 (TDGSRGQNLTSGNNPLRSPFSD). Positions 184–196 (SRGQNLTSGNNPL) are enriched in polar residues. Histidine 249 is a catalytic residue. Residues 250–254 (QANRR) form an ACP-binding region. Residue asparagine 279 is part of the active site.

It belongs to the thiolase-like superfamily. FabH family. In terms of assembly, homodimer.

The protein localises to the cytoplasm. It carries out the reaction malonyl-[ACP] + acetyl-CoA + H(+) = 3-oxobutanoyl-[ACP] + CO2 + CoA. The protein operates within lipid metabolism; fatty acid biosynthesis. In terms of biological role, catalyzes the condensation reaction of fatty acid synthesis by the addition to an acyl acceptor of two carbons from malonyl-ACP. Catalyzes the first condensation reaction which initiates fatty acid synthesis and may therefore play a role in governing the total rate of fatty acid production. Possesses both acetoacetyl-ACP synthase and acetyl transacylase activities. Its substrate specificity determines the biosynthesis of branched-chain and/or straight-chain of fatty acids. In Streptococcus uberis (strain ATCC BAA-854 / 0140J), this protein is Beta-ketoacyl-[acyl-carrier-protein] synthase III.